The chain runs to 1149 residues: Bone sialoprotein-binding protein (1149 aa).

The N-terminal stretch at 1 to 52 (MINRDNKKAITKKGMISNRLNKFSIRKYTVGTASILVGTTLIFGLGNQEAKA) is a signal peptide. The interval 53-601 (AENTSTENAK…GDGTVKPEEK (549 aa)) is ligand binding A region. 2 disordered regions span residues 54 to 249 (ENTS…TAPT) and 675 to 697 (LPTKENGTTDGEKDSNGSSVTVK). Residues 61-75 (AKQDEASASDNKEVV) show a composition bias toward basic and acidic residues. Polar residues predominate over residues 77–89 (ETENNSTQKNDLT). The span at 92–106 (IKKETNTDSHQEAKE) shows a compositional bias: basic and acidic residues. Positions 109–126 (TTSSTQQQQNNATTSTET) are enriched in low complexity. The segment covering 130-145 (NIEKENVKPSTDKTAT) has biased composition (basic and acidic residues). A compositionally biased stretch (polar residues) spans 158–205 (PNNTNNDVTTKPSTSEIQTTPTTPQESTNIENSQPQPTPSKVDNQVTD). Residues 216–241 (SKEELKNNPEKLKELVRNDSNTDRST) show a composition bias toward basic and acidic residues. 3 CNA-B domains span residues 602–714 (LYKI…YKEP), 715–824 (KYNL…YKTP), and 825–935 (KYSL…EEDT). A disordered region spans residues 896-1124 (TQTGTNTTED…TGSENNGSNN (229 aa)). 2 stretches are compositionally biased toward acidic residues: residues 903-913 (TEDDKDADGGE) and 930-1088 (YFEE…DSDS). Residues 1112–1116 (LPETG) carry the LPXTG sorting signal motif. The residue at position 1115 (Thr1115) is a Pentaglycyl murein peptidoglycan amidated threonine. A propeptide spans 1116-1149 (GSENNGSNNATLFGGLFAALGSLLLFGRRKKQNK) (removed by sortase).

This sequence belongs to the serine-aspartate repeat-containing protein (SDr) family.

It is found in the secreted. Its subcellular location is the cell wall. Its function is as follows. Specifically interacts with bone sialoprotein (BSP), a glycoprotein of bone and dentin extracellular matrix. Could contribute to staphylococcal osteomyelitis and arthritis. This Staphylococcus aureus protein is Bone sialoprotein-binding protein (bbp).